Here is a 255-residue protein sequence, read N- to C-terminus: Phosphate import ATP-binding protein PstB (255 aa).

Residues 9–250 (IAVQNLNFYY…PKIQRTEDYI (242 aa)) form the ABC transporter domain. 41–48 (GPSGCGKS) is an ATP binding site.

Belongs to the ABC transporter superfamily. Phosphate importer (TC 3.A.1.7) family. In terms of assembly, the complex is composed of two ATP-binding proteins (PstB), two transmembrane proteins (PstC and PstA) and a solute-binding protein (PstS).

It localises to the cell inner membrane. It catalyses the reaction phosphate(out) + ATP + H2O = ADP + 2 phosphate(in) + H(+). In terms of biological role, part of the ABC transporter complex PstSACB involved in phosphate import. Responsible for energy coupling to the transport system. This chain is Phosphate import ATP-binding protein PstB, found in Haemophilus influenzae (strain 86-028NP).